The primary structure comprises 494 residues: E3 ubiquitin-protein ligase ari-1.1 (494 aa).

Positions 1–30 are enriched in acidic residues; that stretch reads MSSDDEINMDDSDSSQGEIDDGCMSDDDGI. The tract at residues 1–52 is disordered; the sequence is MSSDDEINMDDSDSSQGEIDDGCMSDDDGIVLESREQNSSDYKDNGEPDNEV. Over residues 33–52 the composition is skewed to basic and acidic residues; it reads ESREQNSSDYKDNGEPDNEV. A TRIAD supradomain region spans residues 124–331; that stretch reads GDAECDICCS…SSWYSCNRFD (208 aa). Cysteine 128, cysteine 131, cysteine 142, histidine 144, cysteine 147, cysteine 150, cysteine 169, cysteine 174, cysteine 214, cysteine 219, cysteine 235, cysteine 237, cysteine 242, cysteine 245, histidine 250, cysteine 255, cysteine 282, and cysteine 285 together coordinate Zn(2+). Residues 128-174 form an RING-type 1 zinc finger; it reads CDICCSLGELSGLSCNHRACTQCWKAYLTNKIANNAQSEIECMAPNC. The segment at 194–255 adopts an IBR-type zinc-finger fold; that stretch reads ATYRKLIVAS…GHDWHEPVNC (62 aa). The segment at 282–313 adopts an RING-type 2; atypical zinc-finger fold; the sequence is CPKCMITIEKDGGCNHMTCKNTACRFEFCWMC. Cysteine 295 is a catalytic residue. Positions 300, 305, 310, 313, 320, and 327 each coordinate Zn(2+). The tract at residues 346–494 is ariadne domain; it reads RANLQRYLFY…ADQELWVFNE (149 aa).

It belongs to the RBR family. Ariadne subfamily. Interacts with ubiquitin-conjugating enzyme E2 ubc-18.

The protein resides in the nucleus. It localises to the cytoplasm. The enzyme catalyses [E2 ubiquitin-conjugating enzyme]-S-ubiquitinyl-L-cysteine + [acceptor protein]-L-lysine = [E2 ubiquitin-conjugating enzyme]-L-cysteine + [acceptor protein]-N(6)-ubiquitinyl-L-lysine.. Autoinhibited by the ariadne domain, which masks the second RING-type zinc finger that contains the active site and inhibits the E3 activity. E3 ubiquitin-protein transferase, which catalyzes ubiquitination of target proteins together with ubiquitin-conjugating enzyme E2 ubc-18. Acts with ubc-18 to regulate pharyngeal development. This Caenorhabditis elegans protein is E3 ubiquitin-protein ligase ari-1.1.